Reading from the N-terminus, the 499-residue chain is Patatin-like protein 6 (499 aa).

Positions 111 to 314 (LSIDSGGMRG…AMSNPTAAAI (204 aa)) constitute a PNPLA domain. Residues 116-119 (GGMR) carry the GGXR motif. Catalysis depends on Ser155, which acts as the Nucleophile. Asp301 serves as the catalytic Proton acceptor. The DGA/G signature appears at 301-303 (DGG).

The protein belongs to the patatin family. In terms of tissue distribution, highly expressed in siliques and at lower levels in roots and flowers.

Its function is as follows. Possesses non-specific lipolytic acyl hydrolase (LAH) activity. Hydrolyzes phospholipids as well as galactolipids. May play a role in disease resistance. This is Patatin-like protein 6 (PLP6) from Arabidopsis thaliana (Mouse-ear cress).